The chain runs to 255 residues: Aliphatic sulfonates import ATP-binding protein SsuB (255 aa).

Residues 12 to 233 form the ABC transporter domain; the sequence is LLLNAVSKHY…RLGSVRLAEL (222 aa). Residue 44-51 coordinates ATP; it reads GRSGGGKS.

It belongs to the ABC transporter superfamily. Aliphatic sulfonates importer (TC 3.A.1.17.2) family. As to quaternary structure, the complex is composed of two ATP-binding proteins (SsuB), two transmembrane proteins (SsuC) and a solute-binding protein (SsuA).

It is found in the cell inner membrane. The enzyme catalyses ATP + H2O + aliphatic sulfonate-[sulfonate-binding protein]Side 1 = ADP + phosphate + aliphatic sulfonateSide 2 + [sulfonate-binding protein]Side 1.. Part of the ABC transporter complex SsuABC involved in aliphatic sulfonates import. Responsible for energy coupling to the transport system. The chain is Aliphatic sulfonates import ATP-binding protein SsuB from Escherichia coli O6:H1 (strain CFT073 / ATCC 700928 / UPEC).